A 357-amino-acid polypeptide reads, in one-letter code: Peptide chain release factor 1 (357 aa).

Q234 bears the N5-methylglutamine mark. Positions 282-313 (DSKKQEQRSNNRKQQVGSGDRSERIRTYNFPQ) are disordered.

This sequence belongs to the prokaryotic/mitochondrial release factor family. Methylated by PrmC. Methylation increases the termination efficiency of RF1.

The protein localises to the cytoplasm. Its function is as follows. Peptide chain release factor 1 directs the termination of translation in response to the peptide chain termination codons UAG and UAA. The protein is Peptide chain release factor 1 of Borreliella afzelii (strain PKo) (Borrelia afzelii).